The sequence spans 269 residues: MPLGLKPTCSVCKTTSSSMWKKGAQGEILCHHCTGRGGAGSGGAGSGAAGGTGGSGGGGFGAATFASTSATPPQSNGGGGGKQSKQEIHRRSARLRNTKYKSAPAAEKKVSTKGKGRRHIFKLKNPIKAPESVSTIITAESIFYKGVYYQIGDVVSVIDEQDGKPYYAQIRGFIQDQYCEKSAALTWLIPTLSSPRDQFDPASYIIGPEEDLPRKMEYLEFVCHAPSEYFKSRSSPFPTVPTRPEKGYIWTHVGPTPAITIKESVANHL.

The GATA-type zinc-finger motif lies at 9–33 (CSVCKTTSSSMWKKGAQGEILCHHC). Residues 63 to 115 (ATFASTSATPPQSNGGGGGKQSKQEIHRRSARLRNTKYKSAPAAEKKVSTKGK) are disordered. A Glycyl lysine isopeptide (Lys-Gly) (interchain with G-Cter in SUMO2) cross-link involves residue Lys262.

Component of a chromatin complex, at least composed of KDM5A, GATAD1 and EMSY. Ubiquitously expressed among various tissue types. Expressed in left ventricular myocytes.

The protein localises to the nucleus. Component of some chromatin complex recruited to chromatin sites methylated 'Lys-4' of histone H3 (H3K4me), with a preference for trimethylated form (H3K4me3). In Homo sapiens (Human), this protein is GATA zinc finger domain-containing protein 1 (GATAD1).